The sequence spans 144 residues: MADRLTQLQDAVNSLADQFCNAIGVLQQCGPPASFNNIQTAINKDQPANPTEEYAQLFAALIARTAKDIDVLIDSLPSEESTAALQAASLYKLEEENHEAATCLEDVVYRGDMLLEKIQSALADIAQSQLKTRSGTHSQSLPDS.

This sequence belongs to the Mediator complex subunit 21 family. Interacts with PPARG. Component of the Mediator complex, which is composed of MED1, MED4, MED6, MED7, MED8, MED9, MED10, MED11, MED12, MED13, MED13L, MED14, MED15, MED16, MED17, MED18, MED19, MED20, MED21, MED22, MED23, MED24, MED25, MED26, MED27, MED29, MED30, MED31, CCNC, CDK8 and CDC2L6/CDK11. The MED12, MED13, CCNC and CDK8 subunits form a distinct module termed the CDK8 module. Mediator containing the CDK8 module is less active than Mediator lacking this module in supporting transcriptional activation. Individual preparations of the Mediator complex lacking one or more distinct subunits have been variously termed ARC, CRSP, DRIP, PC2, SMCC and TRAP. Interacts with THRA in a ligand-dependent fashion.

It is found in the nucleus. Component of the Mediator complex, a coactivator involved in the regulated transcription of nearly all RNA polymerase II-dependent genes. Mediator functions as a bridge to convey information from gene-specific regulatory proteins to the basal RNA polymerase II transcription machinery. Mediator is recruited to promoters by direct interactions with regulatory proteins and serves as a scaffold for the assembly of a functional preinitiation complex with RNA polymerase II and the general transcription factors. The protein is Mediator of RNA polymerase II transcription subunit 21 (MED21) of Homo sapiens (Human).